Consider the following 562-residue polypeptide: Phosphopantothenoylcysteine decarboxylase subunit SIS2 (562 aa).

Over residues 1 to 10 (MTAVASTSGK) the composition is skewed to polar residues. 3 disordered regions span residues 1 to 63 (MTAV…SNAT), 97 to 165 (FSDL…KDYD), and 490 to 562 (GYPK…DKHQ). The segment covering 27-42 (GQKEILLDHEDAKGKD) has biased composition (basic and acidic residues). 2 stretches are compositionally biased toward polar residues: residues 44–63 (IINS…SNAT) and 99–113 (DLKQ…TQLK). Residues S47, S50, S54, and S56 each carry the phosphoserine modification. The segment covering 121–134 (SPNSNPAPVSNSIP) has biased composition (low complexity). The segment covering 142 to 156 (NHTNTSRTTQLSGSP) has biased composition (polar residues). S155 is modified (phosphoserine). A compositionally biased stretch (acidic residues) spans 496–553 (EEEDDDEDEEEDDDEEEDTEDKNENNNDDDDDDDDDDDDDDDDDDDDDDDDEDEDEAE).

Belongs to the HFCD (homooligomeric flavin containing Cys decarboxylase) superfamily. Interacts with the C-terminal domain of PPZ1. Component of the phosphopantothenoylcysteine decarboxylase (PPCDC) complex, a heterotrimer composed of CAB3, SIS2 and VHS3.

The protein localises to the nucleus. Its subcellular location is the cytoplasm. Its function is as follows. Component of the phosphopantothenoylcysteine decarboxylase (PPCDC) involved in the coenzyme A synthesis. Acts as an inhibitory subunit of protein phosphatase PPZ1, which is involved in many cellular processes such as G1-S transition or salt tolerance. Also modulates the expression of the ENA1 ATPase. The polypeptide is Phosphopantothenoylcysteine decarboxylase subunit SIS2 (SIS2) (Saccharomyces cerevisiae (strain ATCC 204508 / S288c) (Baker's yeast)).